Consider the following 354-residue polypeptide: uncharacterized protein (354 aa).

Transmembrane regions (helical) follow at residues 9-29, 31-51, 76-96, 109-129, 144-164, 185-205, 278-298, 306-326, and 327-347; these read MGKI…LIFS, ISIN…ISFT, NFGI…LIWV, FLNV…AIVV, IIFS…VLLI, GILV…ALGV, YGTL…GFFY, GIYL…IESG, and ILDI…IYAI.

Its subcellular location is the cell membrane. This is an uncharacterized protein from Methanocaldococcus jannaschii (strain ATCC 43067 / DSM 2661 / JAL-1 / JCM 10045 / NBRC 100440) (Methanococcus jannaschii).